Reading from the N-terminus, the 143-residue chain is Large ribosomal subunit protein uL15 (143 aa).

The tract at residues 1 to 52 (MKLNTLAPAAGSKSAPKRLGRGIGSGLGKTSGKGHKGQKARSGGYHKVGFEG) is disordered. Gly residues predominate over residues 21 to 31 (RGIGSGLGKTS).

Belongs to the universal ribosomal protein uL15 family. In terms of assembly, part of the 50S ribosomal subunit.

Its function is as follows. Binds to the 23S rRNA. The chain is Large ribosomal subunit protein uL15 from Francisella tularensis subsp. novicida (strain U112).